An 853-amino-acid polypeptide reads, in one-letter code: cGMP-dependent protein kinase (853 aa).

The interval 1 to 29 (MEEDDNLKKGNERNKKKAIFSNDDFTGED) is autoinhibitory segment. CNMP-binding domain regions lie at residues 58 to 173 (VCST…FIDS), 176 to 275 (VFDM…IVLG), 295 to 398 (IFKQ…LGNN), and 418 to 517 (IFRY…LQII). 6 residues coordinate 3',5'-cyclic GMP: Lys113, Gly122, Glu123, Ala125, Arg132, and Ser133. 3',5'-cyclic GMP is bound by residues Arg473, Gly482, Glu483, Ala485, Arg492, and Thr493. The 258-residue stretch at 541–798 (LETERIIGRG…FKDIKDHPFF (258 aa)) folds into the Protein kinase domain. ATP contacts are provided by residues 547–555 (IGRGTFGTV) and Lys570. Asp664 acts as the Proton acceptor in catalysis. In terms of domain architecture, AGC-kinase C-terminal spans 799–853 (SNFNWDKLAGRLLDPPLVSKSETYAEDIDIKQIEEEDAEDDEEPLNDEDNWDIDF). The segment at 827-853 (DIKQIEEEDAEDDEEPLNDEDNWDIDF) is disordered. Residues 832 to 853 (EEEDAEDDEEPLNDEDNWDIDF) show a composition bias toward acidic residues.

Belongs to the protein kinase superfamily. AGC Ser/Thr protein kinase family. cGMP subfamily. Monomer. The cofactor is Mg(2+). Autophosphorylated.

Its subcellular location is the cytoplasm. The protein localises to the endoplasmic reticulum membrane. It catalyses the reaction L-seryl-[protein] + ATP = O-phospho-L-seryl-[protein] + ADP + H(+). It carries out the reaction L-threonyl-[protein] + ATP = O-phospho-L-threonyl-[protein] + ADP + H(+). Its activity is regulated as follows. Activated by cGMP. Not activated by cAMP. cGMP binding allosterically triggers a conformational change at the alpha C-helix of cGMP-binding domain 4, which bridges the regulatory and catalytic domains, causing the capping triad, composed of Arg-484, Gln-532 and Asp-533, to form and stabilize the active conformation. The cGMP-binding domains acts cooperatively to activate PKG. In terms of biological role, serine/threonine protein kinase which acts as a downstream effector of the second messenger cGMP. Controls the release of Ca(2+) from intracellular stores by regulating phosphoinositide biosynthesis. Ca(2+) signals are essential for merozoite and sporozoite invasion and egress from host hepatocytes and erythrocytes, and, in the mosquito vector, for gametocyte activation, and ookinete and sporozoite motility. During the host liver stage, regulates the initial invasion of host hepatocytes by sporozoites by regulating sporozoite motility and microneme exocytosis. Following parasite development in the hepatocytes, required for the release of merosomes, a vesicle containing the mature merozoites. During the asexual blood stage, required for the progression from schizont to the ring stage following merozoite invasion of host erythrocytes and for merozoite egress. Regulates merozoite egress by promoting the release of exonemes and micronemes which contain proteins essential for egress. Phosphorylates CDPK1 predominantly at the late schizont stage; phosphorylation at 'Ser-64' regulates CDPK1 protein-protein interaction and phosphorylation at 'Thr-231' may regulate CDPK1 kinase activity. In the mosquito vector, required for the initiation of gametogenesis induced by xanthurenic acid, specifically the gametocyte differentiation from the crescent-shaped form to the spherical form. Required for the gliding motility of ookinetes to reach and penetrate the midgut epithelium by promoting Ca(2+)-mediated activation of CDPK1 and CDPK4. Also required for microneme secretion in ookinete by promoting Ca(2+)-mediated activation of CDPK3. This Plasmodium falciparum (isolate NF54) protein is cGMP-dependent protein kinase.